Consider the following 652-residue polypeptide: MHFFFVPNSSSSSPSPANTSSFSLSFLTPQIPENLCKSPTKIHIGTHGISGQSFLSHPTFSSKNTYLYAVVDRSSSGVFSPQKESANGEGEESNTEEGVLVVRRPLLENSDKESSEEEGKKYPARIDAGLSNIAKKMPIFEPERSESSSSSSAAAAARAQERPLAVNLDLSLYKAKVLARNFRYKDAEKILEKCIAYWPEDGRPYVALGKILSKQSKLAEARILYEKGCQSTQGENSYIWQCWAVLENRLGNVRRARELFDAATVADKKHVAAWHGWANLEIKQGNISKARNLLAKGLKFCGRNEYIYQTLALLEAKAGRYEQARYLFKQATICNSRSCASWLAWAQLEIQQERYPAARKLFEKAVQASPKNRFAWHVWGVFEAGVGNVERGRKLLKIGHALNPRDPVLLQSLGLLEYKHSSANLARALLRRASELDPRHQPVWIAWGWMEWKEGNTTTARELYQRALSIDANTESASRCLQAWGVLEQRAGNLSAARRLFRSSLNINSQSYVTWMTWAQLEEDQGDTERAEEIRNLYFQQRTEVVDDASWVTGFLDIIDPALDTVKRLLNFGQNNDNNRLTTTLRNMNRTKDSQSNQQPESSAGREDIETGSGFNLDVFLRSKLSLDPLKLDVNLDSKRLERFTRGRINGA.

2 disordered regions span residues 1-21 (MHFFFVPNSSSSSPSPANTSS) and 78-121 (VFSP…EGKK). Residues 1–68 (MHFFFVPNSS…TFSSKNTYLY (68 aa)) constitute a chloroplast transit peptide. The span at 105 to 121 (PLLENSDKESSEEEGKK) shows a compositional bias: basic and acidic residues. TPR repeat units follow at residues 168-201 (LDLSLYKAKVLARNFRYKDAEKILEKCIAYWPED), 202-235 (GRPYVALGKILSKQSKLAEARILYEKGCQSTQGE), 237-270 (SYIWQCWAVLENRLGNVRRARELFDAATVADKKH), 271-304 (VAAWHGWANLEIKQGNISKARNLLAKGLKFCGRN), 305-338 (EYIYQTLALLEAKAGRYEQARYLFKQATICNSRS), 339-372 (CASWLAWAQLEIQQERYPAARKLFEKAVQASPKN), 374-406 (FAWHVWGVFEAGVGNVERGRKLLKIGHALNPRD), 407-440 (PVLLQSLGLLEYKHSSANLARALLRRASELDPRH), 441-474 (QPVWIAWGWMEWKEGNTTTARELYQRALSIDANT), 478-511 (SRCLQAWGVLEQRAGNLSAARRLFRSSLNINSQS), 543-576 (TEVVDDASWVTGFLDIIDPALDTVKRLLNFGQNN), and 598-631 (QQPESSAGREDIETGSGFNLDVFLRSKLSLDPLK). Residues 585 to 610 (LRNMNRTKDSQSNQQPESSAGREDIE) form a disordered region.

As to quaternary structure, may form homomultimers. Part of a multi-subunit complex in the range of 60-190 and 600-800 kDa in chloroplast membranes.

It is found in the plastid. Its subcellular location is the chloroplast. It localises to the chloroplast membrane. The protein localises to the chloroplast stroma. In terms of biological role, involved, directly or indirectly, in the processing of chloroplast encoded mRNAs. Exhibits sequence-specific RNA binding and RNA remodeling activities, probably leading to the activation of translation of the target gene cluster psbB-psbT-psbH-petB-petD. Blocks 5'-3' and 3'-5' exoribonucleases (e.g. polynucleotide phosphorylase (PNPase), RNase R) in vitro. Necessary for intercistronic RNA processing of the psbH 5' untranslated region or the stabilization of 5' processed psbH RNAs. Also required for the synthesis of psbB. The polypeptide is Protein high chlorophyll fluorescent 107 (Arabidopsis thaliana (Mouse-ear cress)).